The sequence spans 160 residues: Ribosome maturation factor RimP (160 aa).

Belongs to the RimP family.

The protein localises to the cytoplasm. In terms of biological role, required for maturation of 30S ribosomal subunits. The polypeptide is Ribosome maturation factor RimP (Orientia tsutsugamushi (strain Boryong) (Rickettsia tsutsugamushi)).